The following is a 194-amino-acid chain: Lipoprotein signal peptidase (194 aa).

The next 2 membrane-spanning stretches (helical) occupy residues 75–95 and 97–117; these read TIFL…MICS and TIGS…NLID. Catalysis depends on residues aspartate 126 and aspartate 144. A helical membrane pass occupies residues 135–155; the sequence is YSFPVFNLADCFITLGVIILM.

It belongs to the peptidase A8 family.

Its subcellular location is the cell inner membrane. It catalyses the reaction Release of signal peptides from bacterial membrane prolipoproteins. Hydrolyzes -Xaa-Yaa-Zaa-|-(S,diacylglyceryl)Cys-, in which Xaa is hydrophobic (preferably Leu), and Yaa (Ala or Ser) and Zaa (Gly or Ala) have small, neutral side chains.. It participates in protein modification; lipoprotein biosynthesis (signal peptide cleavage). This protein specifically catalyzes the removal of signal peptides from prolipoproteins. This chain is Lipoprotein signal peptidase, found in Rickettsia prowazekii (strain Madrid E).